We begin with the raw amino-acid sequence, 24 residues long: Coenzyme PQQ synthesis protein A (24 aa).

The pyrroloquinoline quinone (Glu-Tyr) cross-link spans 16 to 20 (EITMY).

Belongs to the PqqA family.

Its pathway is cofactor biosynthesis; pyrroloquinoline quinone biosynthesis. Functionally, required for coenzyme pyrroloquinoline quinone (PQQ) biosynthesis. PQQ is probably formed by cross-linking a specific glutamate to a specific tyrosine residue and excising these residues from the peptide. The protein is Coenzyme PQQ synthesis protein A of Cupriavidus taiwanensis (strain DSM 17343 / BCRC 17206 / CCUG 44338 / CIP 107171 / LMG 19424 / R1) (Ralstonia taiwanensis (strain LMG 19424)).